The chain runs to 850 residues: DEAD-box ATP-dependent RNA helicase 26 (850 aa).

Disordered stretches follow at residues 60–82 (TRPE…IRAS) and 106–350 (GKFT…ENDE). Over residues 61–71 (RPERSQPEFAR) the composition is skewed to basic and acidic residues. Thr-109 is modified (phosphothreonine). Ser-110 carries the post-translational modification Phosphoserine. Basic and acidic residues-rich tracts occupy residues 118-140 (EVVR…EGQS) and 284-299 (GRND…REPG). 2 stretches are compositionally biased toward acidic residues: residues 315–325 (LEEEDSSDDDE) and 336–350 (LPSE…ENDE). The short motif at 382–410 (TRFDQFPLSPLSLKAIKDAGFETMTVVQE) is the Q motif element. Residues 413–596 (LPIILQGKDV…HVALKRDHEF (184 aa)) enclose the Helicase ATP-binding domain. Residue 426–433 (AKTGTGKT) coordinates ATP. Residues 544–547 (DEAD) carry the DEAD box motif. The Helicase C-terminal domain occupies 630 to 777 (LLKEHIADNV…IDPEAVKRVQ (148 aa)).

Belongs to the DEAD box helicase family.

The catalysed reaction is ATP + H2O = ADP + phosphate + H(+). The chain is DEAD-box ATP-dependent RNA helicase 26 (RH26) from Arabidopsis thaliana (Mouse-ear cress).